We begin with the raw amino-acid sequence, 416 residues long: Gamma-glutamyl phosphate reductase (416 aa).

The protein belongs to the gamma-glutamyl phosphate reductase family.

The protein resides in the cytoplasm. It catalyses the reaction L-glutamate 5-semialdehyde + phosphate + NADP(+) = L-glutamyl 5-phosphate + NADPH + H(+). It participates in amino-acid biosynthesis; L-proline biosynthesis; L-glutamate 5-semialdehyde from L-glutamate: step 2/2. In terms of biological role, catalyzes the NADPH-dependent reduction of L-glutamate 5-phosphate into L-glutamate 5-semialdehyde and phosphate. The product spontaneously undergoes cyclization to form 1-pyrroline-5-carboxylate. The polypeptide is Gamma-glutamyl phosphate reductase (Streptococcus mutans serotype c (strain ATCC 700610 / UA159)).